Consider the following 386-residue polypeptide: GTPase Obg (386 aa).

The region spanning 1–159 is the Obg domain; it reads MKFVDEAKIK…RNLLLELLLL (159 aa). Residues 160–333 form the OBG-type G domain; that stretch reads ADVGMLGLPN…LCRDVVEYLE (174 aa). GTP-binding positions include 166–173, 191–195, 213–216, 283–286, and 314–316; these read GLPNAGKS, FTTLV, DIPG, NKTD, and AAI. Mg(2+)-binding residues include Ser173 and Thr193.

Belongs to the TRAFAC class OBG-HflX-like GTPase superfamily. OBG GTPase family. In terms of assembly, monomer. The cofactor is Mg(2+).

The protein localises to the cytoplasm. An essential GTPase which binds GTP, GDP and possibly (p)ppGpp with moderate affinity, with high nucleotide exchange rates and a fairly low GTP hydrolysis rate. Plays a role in control of the cell cycle, stress response, ribosome biogenesis and in those bacteria that undergo differentiation, in morphogenesis control. The protein is GTPase Obg of Psychromonas ingrahamii (strain DSM 17664 / CCUG 51855 / 37).